We begin with the raw amino-acid sequence, 91 residues long: Acylphosphatase (91 aa).

Residues Arg4 to Tyr91 form the Acylphosphatase-like domain. Residues Arg19 and Asn37 contribute to the active site.

It belongs to the acylphosphatase family.

It carries out the reaction an acyl phosphate + H2O = a carboxylate + phosphate + H(+). The chain is Acylphosphatase (acyP) from Geotalea uraniireducens (strain Rf4) (Geobacter uraniireducens).